A 222-amino-acid chain; its full sequence is MLSRAACSTSRRLVPALSVLGSRQKHSLPDLPYDYGALEPHINAQIMQLHHSKHHAAYVNNLNVAEEKYREALEKGDVTAQIALQPALKFNGGGHINHSIFWTNLSPNGGGEPQGELLEAIKRDFGSFAKFKEKLTAVSVGVQGSGWGWLGFNKEQGRLQIAACSNQDPLQGTTGLIPLLGIDVWEHAYYLQYKNVRPDYLKAIWNVINWENVTARYTACSK.

Residues 1 to 24 constitute a mitochondrion transit peptide; sequence MLSRAACSTSRRLVPALSVLGSRQ. A Mn(2+)-binding site is contributed by histidine 50. Position 58 is a 3'-nitrotyrosine (tyrosine 58). Lysine 68 and lysine 75 each carry N6-acetyllysine; alternate. 2 positions are modified to N6-succinyllysine; alternate: lysine 68 and lysine 75. Position 98 (histidine 98) interacts with Mn(2+). 2 positions are modified to N6-acetyllysine; alternate: lysine 122 and lysine 130. N6-succinyllysine; alternate occurs at positions 122 and 130. Mn(2+) is bound by residues aspartate 183 and histidine 187. Lysine 202 is modified (N6-acetyllysine).

The protein belongs to the iron/manganese superoxide dismutase family. Homotetramer. Requires Mn(2+) as cofactor. In terms of processing, nitrated under oxidative stress. Nitration coupled with oxidation inhibits the catalytic activity. Post-translationally, acetylation at Lys-122 decreases enzymatic activity. Deacetylated by SIRT3 upon exposure to ionizing radiations or after long fasting. Polyubiquitinated; leading to proteasomal degradation. Deubiquitinated by USP36 which increases protein stability.

It localises to the mitochondrion matrix. The catalysed reaction is 2 superoxide + 2 H(+) = H2O2 + O2. Functionally, destroys superoxide anion radicals which are normally produced within the cells and which are toxic to biological systems. This Bos taurus (Bovine) protein is Superoxide dismutase [Mn], mitochondrial (SOD2).